A 228-amino-acid chain; its full sequence is Lipoprotein-releasing system ATP-binding protein LolD (228 aa).

The ABC transporter domain occupies 5–228 (LRCHQVCKTY…DGLLTDITGA (224 aa)). 41–48 (GSSGSGKS) serves as a coordination point for ATP.

This sequence belongs to the ABC transporter superfamily. Lipoprotein translocase (TC 3.A.1.125) family. The complex is composed of two ATP-binding proteins (LolD) and two transmembrane proteins (LolC and LolE).

It localises to the cell inner membrane. Its function is as follows. Part of the ABC transporter complex LolCDE involved in the translocation of mature outer membrane-directed lipoproteins, from the inner membrane to the periplasmic chaperone, LolA. Responsible for the formation of the LolA-lipoprotein complex in an ATP-dependent manner. The chain is Lipoprotein-releasing system ATP-binding protein LolD from Vibrio cholerae serotype O1 (strain ATCC 39315 / El Tor Inaba N16961).